The sequence spans 947 residues: Coiled-coil domain-containing protein 39 (947 aa).

4 coiled-coil regions span residues 16–194 (AIPV…TLDN), 221–402 (QELI…KELL), 471–522 (KVNT…TEKI), and 582–813 (VLTL…IRSG). 2 stretches are compositionally biased toward low complexity: residues 866-911 (SLPS…VSSP) and 926-947 (SPRGSQPSSAGSSRSSSKCKSP). Residues 866 to 947 (SLPSPSSTPS…SRSSSKCKSP (82 aa)) form a disordered region.

The protein belongs to the CCDC39 family.

The protein resides in the cytoplasm. It localises to the cytoskeleton. Its subcellular location is the cilium axoneme. In terms of biological role, required for assembly of dynein regulatory complex (DRC) and inner dynein arm (IDA) complexes, which are responsible for ciliary beat regulation, thereby playing a central role in motility in cilia and flagella. Probably acts together with ccdc40 to form a molecular ruler that determines the 96 nanometer (nm) repeat length and arrangements of components in cilia and flagella. Not required for outer dynein arm complexes assembly. The polypeptide is Coiled-coil domain-containing protein 39 (ccdc39) (Danio rerio (Zebrafish)).